A 338-amino-acid polypeptide reads, in one-letter code: Lipoate-protein ligase A (338 aa).

Positions 29–216 (PATQRVLFLW…AFFAHYGERV (188 aa)) constitute a BPL/LPL catalytic domain. ATP-binding positions include arginine 71, 76–79 (GAVF), and lysine 134. Position 134 (lysine 134) interacts with (R)-lipoate.

It belongs to the LplA family. In terms of assembly, monomer.

It localises to the cytoplasm. It carries out the reaction L-lysyl-[lipoyl-carrier protein] + (R)-lipoate + ATP = N(6)-[(R)-lipoyl]-L-lysyl-[lipoyl-carrier protein] + AMP + diphosphate + H(+). It functions in the pathway protein modification; protein lipoylation via exogenous pathway; protein N(6)-(lipoyl)lysine from lipoate: step 1/2. The protein operates within protein modification; protein lipoylation via exogenous pathway; protein N(6)-(lipoyl)lysine from lipoate: step 2/2. Catalyzes both the ATP-dependent activation of exogenously supplied lipoate to lipoyl-AMP and the transfer of the activated lipoyl onto the lipoyl domains of lipoate-dependent enzymes. The polypeptide is Lipoate-protein ligase A (Salmonella paratyphi B (strain ATCC BAA-1250 / SPB7)).